A 324-amino-acid polypeptide reads, in one-letter code: YPNTFWMNPQYLIKLEEEDEDQEDGESGCTFLVGLIQKHRRRQRKMGEDMHTIGFGIYEVPEELTGQTNIHLSKNFFLTHRARERSDTFINLREVLNRFKLPPGEYILVPSTFEPNKDGDFCIRVFSEKKADYQVVDDEIEADLEENDASEDDIDDGFRRLFAQLAGEDAEISAFELQTILRRVLAKRQDIKSDGFSIETCRIMVDMLDSDGSAKLGLKEFYILWTKIQKYQKIYREIDVDRSGTMNSYEMRKALEEAGFKLPCQLHQVIVARFADDQLIIDFDNFVRCLVRLETLFRISKQLDSENTGTIELDLISWLCFSVL.

The segment at 1 to 138 (YPNTFWMNPQ…KKADYQVVDD (138 aa)) is domain III. The tract at residues 139–153 (EIEADLEENDASEDD) is linker. The tract at residues 158-324 (FRRLFAQLAG…LISWLCFSVL (167 aa)) is domain IV. Ca(2+) contacts are provided by Ala166, Asp169, Glu171, Glu176, Asp209, Asp211, Ser213, Lys215, Glu220, Asp239, Asp241, Ser243, Thr245, Glu250, Asp282, and Asn285. 2 consecutive EF-hand domains span residues 190–224 (DIKS…FYIL) and 226–261 (TKIQ…AGFK).

This sequence belongs to the peptidase C2 family. As to quaternary structure, forms a heterodimer with a small (regulatory) subunit (CAPNS1). Interacts with CPEB3; this leads to cleavage of CPEB3. The cofactor is Ca(2+). As to expression, ubiquitous.

It is found in the cytoplasm. The protein resides in the cell membrane. The enzyme catalyses Broad endopeptidase specificity.. Activated by 200-1000 micromolar concentrations of calcium and inhibited by calpastatin. In terms of biological role, calcium-regulated non-lysosomal thiol-protease which catalyzes limited proteolysis of substrates involved in cytoskeletal remodeling and signal transduction. Proteolytically cleaves MYOC at 'Arg-226'. Proteolytically cleaves CPEB3 following neuronal stimulation which abolishes CPEB3 translational repressor activity, leading to translation of CPEB3 target mRNAs. This Sus scrofa (Pig) protein is Calpain-2 catalytic subunit (CAPN2).